The following is a 334-amino-acid chain: Trans-3-hydroxy-L-proline dehydratase (334 aa).

Cys-91 serves as the catalytic Proton acceptor. Residues 92–93 (GH), Asp-250, and 255–256 (GT) each bind substrate.

Belongs to the proline racemase family.

The enzyme catalyses trans-3-hydroxy-L-proline = 1-pyrroline-2-carboxylate + H2O. Catalyzes the dehydration of trans-3-hydroxy-L-proline (t3LHyp) to Delta(1)-pyrroline-2-carboxylate (Pyr2C). Is likely involved in a degradation pathway that converts t3LHyp to L-proline, which allows B.cereus to grow on t3LHyp as a sole carbon source. Displays no proline racemase activity. This is Trans-3-hydroxy-L-proline dehydratase from Bacillus cereus (strain ATCC 14579 / DSM 31 / CCUG 7414 / JCM 2152 / NBRC 15305 / NCIMB 9373 / NCTC 2599 / NRRL B-3711).